A 425-amino-acid polypeptide reads, in one-letter code: MPAGRPGPVAQSARRPPRPLSSLWSPLLLCVLGVPRGGSGAHTAVISPQDPTLLIGSSLQATCSIHGDTPGATAEGLYWTLNGRRLPSELSRLLNTSTLALALANLNGSRQQSGDNLVCHARDGSILAGSCLYVGLPPEKPFNISCWSRNMKDLTCRWTPGAHGETFLHTNYSLKYKLRWYGQDNTCEEYHTVGPHSCHIPKDLALFTPYEIWVEATNRLGSARSDVLTLDVLDVVTTDPPPDVHVSRVGGLEDQLSVRWVSPPALKDFLFQAKYQIRYRVEDSVDWKVVDDVSNQTSCRLAGLKPGTVYFVQVRCNPFGIYGSKKAGIWSEWSHPTAASTPRSERPGPGGGVCEPRGGEPSSGPVRRELKQFLGWLKKHAYCSNLSFRLYDQWRAWMQKSHKTRNQDEGILPSGRRGAARGPAG.

The signal sequence occupies residues 1–33 (MPAGRPGPVAQSARRPPRPLSSLWSPLLLCVLG). The region spanning 35–134 (PRGGSGAHTA…SILAGSCLYV (100 aa)) is the Ig-like C2-type domain. Residues Asn-95, Asn-107, and Asn-143 are each glycosylated (N-linked (GlcNAc...) asparagine). Fibronectin type-III domains lie at 140 to 235 (KPFN…VLDV) and 240 to 344 (PPPD…TPRS). Cys-146 and Cys-156 are joined by a disulfide. Residue Asn-171 is glycosylated (N-linked (GlcNAc...) asparagine). A disulfide bond links Cys-187 and Cys-198. Ser-222 carries the phosphoserine modification. Asn-295 is a glycosylation site (N-linked (GlcNAc...) asparagine). Positions 330-334 (WSEWS) match the WSXWS motif motif. Residues 335-366 (HPTAASTPRSERPGPGGGVCEPRGGEPSSGPV) form a disordered region. The N-linked (GlcNAc...) asparagine glycan is linked to Asn-385. The tract at residues 402-425 (HKTRNQDEGILPSGRRGAARGPAG) is disordered. Positions 415-425 (GRRGAARGPAG) are enriched in low complexity.

The protein belongs to the type I cytokine receptor family. Type 3 subfamily. In terms of assembly, forms covalent di- and tetramers. Forms a heteromeric complex with cardiotrophin-like cytokine CLCF1/CLC; the CRLF1-CLCF1 complex is a ligand for the ciliary neurotrophic factor receptor/CNTFR. The CRLF1-CLCF1 heterodimer, as well as tripartite signaling complex formed by CRLF1, CLCF1 and CNTFR bind SORL1 (via N-terminal ectodomain); within this complex, the interaction is mediated predominantly by the CRLF1 moiety. Widely expressed in the embryo. Not detected in the brain of adult mice.

Its subcellular location is the secreted. In terms of biological role, in complex with CLCF1, forms a heterodimeric neurotropic cytokine that plays a crucial role during neuronal development. Plays a role in the initiation and/or maintenance of suckling in neonatal mice. May also play a regulatory role in the immune system. This chain is Cytokine receptor-like factor 1 (Crlf1), found in Mus musculus (Mouse).